The following is a 178-amino-acid chain: Large ribosomal subunit protein uL5 (178 aa).

Belongs to the universal ribosomal protein uL5 family. Part of the 50S ribosomal subunit; part of the 5S rRNA/L5/L18/L25 subcomplex. Contacts the 5S rRNA and the P site tRNA. Forms a bridge to the 30S subunit in the 70S ribosome.

In terms of biological role, this is one of the proteins that bind and probably mediate the attachment of the 5S RNA into the large ribosomal subunit, where it forms part of the central protuberance. In the 70S ribosome it contacts protein S13 of the 30S subunit (bridge B1b), connecting the 2 subunits; this bridge is implicated in subunit movement. Contacts the P site tRNA; the 5S rRNA and some of its associated proteins might help stabilize positioning of ribosome-bound tRNAs. In Wolbachia pipientis subsp. Culex pipiens (strain wPip), this protein is Large ribosomal subunit protein uL5.